Consider the following 302-residue polypeptide: ICOS ligand (302 aa).

An N-terminal signal peptide occupies residues 1–18 (MRLGSPGLLFLLFSSLRA). Positions 19–129 (DTQEKEVRAM…LGFQEVLSVE (111 aa)) constitute an Ig-like V-type domain. Topologically, residues 19-256 (DTQEKEVRAM…VSTGEKNAAT (238 aa)) are extracellular. The cysteines at positions 37 and 113 are disulfide-linked. N-linked (GlcNAc...) asparagine glycans are attached at residues N70, N137, N173, N186, and N225. The 87-residue stretch at 141–227 (PVVSAPHSPS…ENVLLQQNLT (87 aa)) folds into the Ig-like C2-type domain. The cysteines at positions 158 and 216 are disulfide-linked. The chain crosses the membrane as a helical span at residues 257 to 277 (WSILAVLCLLVVVAVAIGWVC). At 278–302 (RDRCLQHSYAGAWAVSPETELTGHV) the chain is on the cytoplasmic side.

The protein belongs to the immunoglobulin superfamily. BTN/MOG family. As to quaternary structure, interacts with CTLA4 (in vitro). Expressed on peripheral blood B-cells and monocytes, as well as on monocyte-derived dendritic cells (at protein level). As to expression, widely expressed (brain, heart, kidney, liver, lung, pancreas, placenta, skeletal muscle, bone marrow, colon, ovary, prostate, testis, lymph nodes, leukocytes, spleen, thymus and tonsil). In terms of tissue distribution, detected only in lymph nodes, leukocytes and spleen. Expressed on activated monocytes and dendritic cells.

The protein resides in the cell membrane. In terms of biological role, ligand for the T-cell-specific cell surface receptor ICOS. Acts as a costimulatory signal for T-cell proliferation and cytokine secretion. Also induces B-cell proliferation and differentiation into plasma cells. Could play an important role in mediating local tissue responses to inflammatory conditions, as well as in modulating the secondary immune response by co-stimulating memory T-cell function. In endothelial cells, required for proper neutrophil transmigration in response to chemoattractants, such as CXCL8/IL8 or N-formyl-methionyl peptides (fMLP). This chain is ICOS ligand (ICOSLG), found in Homo sapiens (Human).